Consider the following 163-residue polypeptide: MPSFDIVSEIDMQEVRNAVENATRDLGTRWDFRNVPASFELNEKDESIKVASESDFQVQQLLDILREKLSKRSIEGSALEIPEEMTHSGKTYSVDAKLKQGIESAQAKKLVKLIKDSKLKVQVQIQGDEVRVTGKSRDDLQGVMALVRGADLGQPFQFKNFRD.

It belongs to the YajQ family.

Its function is as follows. Nucleotide-binding protein. The polypeptide is Nucleotide-binding protein Spro_1084 (Serratia proteamaculans (strain 568)).